A 333-amino-acid polypeptide reads, in one-letter code: HTH-type transcriptional regulator Cphy_2742 (333 aa).

Residues 1–55 (MNIYDVSQKAGVSIATVSRVINGNPNVSEKTKQKVLDVMKEIGYTPNVFARGLGL) form the HTH lacI-type domain. The H-T-H motif DNA-binding region spans 3 to 22 (IYDVSQKAGVSIATVSRVIN).

The protein resides in the cytoplasm. Functionally, involved in control of pectin and galacturonic acid metabolism. Probably represses a comprehensive set of pectin fermentation genes by binding a conserved palindrome at or downstream of their transcription start site to block transcription. In the presence of galacturonic acid may activate transcription of acetate synthesis and other aspects of carbon metabolism. This is HTH-type transcriptional regulator Cphy_2742 from Lachnoclostridium phytofermentans (strain ATCC 700394 / DSM 18823 / ISDg) (Clostridium phytofermentans).